Consider the following 287-residue polypeptide: Urease accessory protein UreD (287 aa).

The protein belongs to the UreD family. In terms of assembly, ureD, UreF and UreG form a complex that acts as a GTP-hydrolysis-dependent molecular chaperone, activating the urease apoprotein by helping to assemble the nickel containing metallocenter of UreC. The UreE protein probably delivers the nickel.

The protein localises to the cytoplasm. In terms of biological role, required for maturation of urease via the functional incorporation of the urease nickel metallocenter. This is Urease accessory protein UreD from Herpetosiphon aurantiacus (strain ATCC 23779 / DSM 785 / 114-95).